A 219-amino-acid chain; its full sequence is MDTEDTSSASSSSVSPPSSPGGGHHHRLPPKRRAGRKKFRETRHPVYRGVRARAGGSRWVCEVREPQAQARIWLGTYPTPEMAARAHDVAAIALRGERGAELNFPDSPSTLPRARTASPEDIRLAAAQAAELYRRPPPPLALPEDPQEGTSGGGATATSGRPAAVFVDEDAIFDMPGLIDDMARGMMLTPPAIGRSLDDWAAIDDDDDHYHMDYKLWMD.

The interval 1 to 45 (MDTEDTSSASSSSVSPPSSPGGGHHHRLPPKRRAGRKKFRETRHP) is disordered. The segment covering 7 to 16 (SSASSSSVSP) has biased composition (low complexity). Positions 23-41 (GHHHRLPPKRRAGRKKFRE) are enriched in basic residues. Positions 46-105 (VYRGVRARAGGSRWVCEVREPQAQARIWLGTYPTPEMAARAHDVAAIALRGERGAELNFP) form a DNA-binding region, AP2/ERF. Positions 134–161 (RRPPPPLALPEDPQEGTSGGGATATSGR) are disordered.

This sequence belongs to the AP2/ERF transcription factor family. ERF subfamily. As to expression, mostly expressed in developing seeds and apices.

It is found in the nucleus. Transcriptional activator that binds specifically to the DNA sequence 5'-[AG]CCGAC-3'. Binding to the C-repeat/DRE element mediates high salinity- and dehydration-inducible transcription. The chain is Dehydration-responsive element-binding protein 1F (DREB1F) from Oryza sativa subsp. indica (Rice).